The following is a 253-amino-acid chain: MDNRFATAFVIACVLSLISTIYMAASIGTDFWYEYRSPIQENSSDSNKIAWEDFLGDEADEKTYNDVLFRYNGSLGLWRRCITIPKNTHWYAPPERTESFDVVTKCMSFTLNEQFMEKYVDPGNHNSGIDLLRTYLWRCQFLLPFVSLGLMCFGALIGLCACICRSLYPTLATGILHLLAGLCTLGSVSCYVAGIELLHQKVELPKDVSGEFGWSFCLACVSAPLQFMAAALFIWAAHTNRKEYTLMKAYRVA.

The helical transmembrane segment at 5–25 threads the bilayer; that stretch reads FATAFVIACVLSLISTIYMAA. N42 and N72 each carry an N-linked (GlcNAc...) asparagine glycan. 3 helical membrane-spanning segments follow: residues 141 to 161, 175 to 195, and 216 to 236; these read FLLPFVSLGLMCFGALIGLCA, ILHLLAGLCTLGSVSCYVAGI, and FCLACVSAPLQFMAAALFIWA.

It belongs to the PMP-22/EMP/MP20 family. In the brain, highly expressed in endothelial cells of the cerebellum compared to other regions (at protein level).

The protein localises to the cell junction. It is found in the tight junction. Its subcellular location is the cell membrane. Functionally, plays a role in negatively regulating the permeability of cells to small molecules. This is Claudin domain-containing protein 1 (Cldnd1) from Mus musculus (Mouse).